Here is a 2335-residue protein sequence, read N- to C-terminus: MAGVFPYRGPGNPVPGPLAPLPDYMSEEKLQEKARKWQQLQAKRYAEKRKFGFVDAQKEDMPPEHVRKIIRDHGDMTNRKFRHDKRVYLGALKYMPHAVLKLLENMPMPWEQIRDVPVLYHITGAISFVNEIPWVIEPVYISQWGSMWIMMRREKRDRRHFKRMRFPPFDDEEPPLDYADNILDVEPLEAIQLELDPEEDAPVLDWFYDHQPLRDSRKYVNGSTYQRWQFTLPMMSTLYRLANQLLTDLVDDNYFYLFDLKAFFTSKALNMAIPGGPKFEPLVRDINLQDEDWNEFNDINKIIIRQPIRTEYKIAFPYLYNNLPHHVHLTWYHTPNVVFIKTEDPDLPAFYFDPLINPISHRHSVKSQEPLPDDDEEFELPEFVEPFLKDTPLYTDNTANGIALLWAPRPFNLRSGRTRRALDIPLVKNWYREHCPAGQPVKVRVSYQKLLKYYVLNALKHRPPKAQKKRYLFRSFKATKFFQSTKLDWVEVGLQVCRQGYNMLNLLIHRKNLNYLHLDYNFNLKPVKTLTTKERKKSRFGNAFHLCREVLRLTKLVVDSHVQYRLGNVDAFQLADGLQYIFAHVGQLTGMYRYKYKLMRQIRMCKDLKHLIYYRFNTGPVGKGPGCGFWAAGWRVWLFFMRGITPLLERWLGNLLARQFEGRHSKGVAKTVTKQRVESHFDLELRAAVMHDILDMMPEGIKQNKARTILQHLSEAWRCWKANIPWKVPGLPTPIENMILRYVKAKADWWTNTAHYNRERIRRGATVDKTVCKKNLGRLTRLYLKAEQERQHNYLKDGPYITAEEAVAVYTTTVHWLESRRFSPIPFPPLSYKHDTKLLILALERLKEAYSVKSRLNQSQREELGLIEQAYDNPHEALSRIKRHLLTQRAFKEVGIEFMDLYSHLVPVYDVEPLEKITDAYLDQYLWYEADKRRLFPPWIKPADTEPPPLLVYKWCQGINNLQDVWETSEGECNVMLESRFEKMYEKIDLTLLNRLLRLIVDHNIADYMTAKNNVVINYKDMNHTNSYGIIRGLQFASFIVQYYGLVMDLLVLGLHRASEMAGPPQMPNDFLSFQDIATEAAHPIRLFCRYIDRIHIFFRFTADEARDLIQRYLTEHPDPNNENIVGYNNKKCWPRDARMRLMKHDVNLGRAVFWDIKNRLPRSVTTVQWENSFVSVYSKDNPNLLFNMCGFECRILPKCRTSYEEFTHKDGVWNLQNEVTKERTAQCFLRVDDESMQRFHNRVRQILMASGSTTFTKIVNKWNTALIGLMTYFREAVVNTQELLDLLVKCENKIQTRIKIGLNSKMPSRFPPVVFYTPKELGGLGMLSMGHVLIPQSDLRWSKQTDVGITHFRSGMSHEEDQLIPNLYRYIQPWESEFIDSQRVWAEYALKRQEAIAQNRRLTLEDLEDSWDRGIPRINTLFQKDRHTLAYDKGWRVRTDFKQYQVLKQNPFWWTHQRHDGKLWNLNNYRTDMIQALGGVEGILEHTLFKGTYFPTWEGLFWEKASGFEESMKWKKLTNAQRSGLNQIPNRRFTLWWSPTINRANVYVGFQVQLDLTGIFMHGKIPTLKISLIQIFRAHLWQKIHESIVMDLCQVFDQELDALEIETVQKETIHPRKSYKMNSSCADILLFASYKWNVSRPSLLADSKDVMDSTTTQKYWIDIQLRWGDYDSHDIERYARAKFLDYTTDNMSIYPSPTGVLIAIDLAYNLHSAYGNWFPGSKPLIQQAMAKIMKANPALYVLRERIRKGLQLYSSEPTEPYLSSQNYGELFSNQIIWFVDDTNVYRVTIHKTFEGNLTTKPINGAIFIFNPRTGQLFLKIIHTSVWAGQKRLGQLAKWKTAEEVAALIRSLPVEEQPKQIIVTRKGMLDPLEVHLLDFPNIVIKGSELQLPFQACLKVEKFGDLILKATEPQMVLFNLYDDWLKTISSYTAFSRLILILRALHVNNDRAKVILKPDKTTITEPHHIWPTLTDEEWIKVEVQLKDLILADYGKKNNVNVASLTQSEIRDIILGMEISAPSQQRQQIAEIEKQTKEQSQLTATQTRTVNKHGDEIITSTTSNYETQTFSSKTEWRVRAISAANLHLRTNHIYVSSDDIKETGYTYILPKNVLKKFICISDLRAQIAGYLYGVSPPDNPQVKEIRCIVMVPQWGTHQTVHLPGQLPQHEYLKEMEPLGWIHTQPNESPQLSPQDVTTHAKIMADNPSWDGEKTIIITCSFTPGSCTLTAYKLTPSGYEWGRQNTDKGNNPKGYLPSHYERVQMLLSDRFLGFFMVPAQSSWNYNFMGVRHDPNMKYELQLANPKEFYHEVHRPSHFLNFALLQEGEVYSADREDLYA.

N-acetylalanine is present on Ala-2. Positions 812–1303 (TTVHWLESRR…KIQTRIKIGL (492 aa)) are reverse transcriptase homology domain. Ser-859 and Ser-1358 each carry phosphoserine. The tract at residues 1304-1577 (NSKMPSRFPP…TLKISLIQIF (274 aa)) is linker. Lys-1425 carries the N6,N6-dimethyllysine modification. Lys-1463 carries the post-translational modification N6-acetyllysine. An important for branch point selection region spans residues 1513-1526 (MKWKKLTNAQRSGL). The segment at 1581-1752 (LWQKIHESIV…LRERIRKGLQ (172 aa)) is restriction endonuclease homology domain. Positions 1669–2034 (GDYDSHDIER…QIAEIEKQTK (366 aa)) are involved in interaction with pre-mRNA 5' splice site. Positions 1767–2020 (NYGELFSNQI…ILGMEISAPS (254 aa)) are RNase H homology domain. Residues 2103–2234 (TYILPKNVLK…LTAYKLTPSG (132 aa)) enclose the MPN domain. Residues 2301–2335 (PKEFYHEVHRPSHFLNFALLQEGEVYSADREDLYA) form a required for interaction with EFTUD2 and SNRNP200 region.

In terms of assembly, part of the U5 snRNP complex. Component of the U4/U6-U5 tri-snRNP complex composed of the U4, U6 and U5 snRNAs and at least PRPF3, PRPF4, PRPF6, PRPF8, PRPF31, SNRNP200, TXNL4A, SNRNP40, DDX23, CD2BP2, PPIH, SNU13, EFTUD2, SART1 and USP39. Component of the U5.U4atac/U6atac snRNP complexes in U12-dependent spliceosomes. Within the minor spliceosome, which acts on U12-type introns, interacts with PPIL2 and RBM48. Core component of U2-type precatalytic, catalytic and postcatalytic spliceosomal complexes. Found in a mRNA splicing-dependent exon junction complex (EJC) with SRRM1. Interacts with U5 snRNP proteins SNRP116 and SNRNP40. Interacts with EFTUD2. Interacts (via the MPN (JAB/Mov34) domain) with PRPF3 ('Lys-63'-linked polyubiquitinated); may stabilize the U4/U6-U5 tri-snRNP complex. Interacts (via RNase H homology domain) with AAR2. Interacts with RPAP3 and URI1 in a ZNHIT2-dependent manner. Interacts with C9orf78. Interacts with SNRNP200; the interaction is direct. Interacts with TSSC4; the interaction is direct. Widely expressed.

The protein localises to the nucleus. Its subcellular location is the nucleus speckle. In terms of biological role, plays a role in pre-mRNA splicing as core component of precatalytic, catalytic and postcatalytic spliceosomal complexes, both of the predominant U2-type spliceosome and the minor U12-type spliceosome. Functions as a scaffold that mediates the ordered assembly of spliceosomal proteins and snRNAs. Required for the assembly of the U4/U6-U5 tri-snRNP complex, a building block of the spliceosome. Functions as a scaffold that positions spliceosomal U2, U5 and U6 snRNAs at splice sites on pre-mRNA substrates, so that splicing can occur. Interacts with both the 5' and the 3' splice site. This is Pre-mRNA-processing-splicing factor 8 (PRPF8) from Homo sapiens (Human).